The primary structure comprises 352 residues: Putative [LysW]-L-2-aminoadipate 6-phosphate reductase (352 aa).

NADP(+) is bound at residue 11–14 (SGYT). Cys148 is a catalytic residue. Asn319 lines the NADP(+) pocket.

It belongs to the NAGSA dehydrogenase family. Type 1 subfamily. LysY sub-subfamily.

The protein localises to the cytoplasm. The catalysed reaction is [amino-group carrier protein]-C-terminal-N-(1-carboxy-5-oxopentan-1-yl)-L-glutamine + phosphate + NADP(+) = [amino-group carrier protein]-C-terminal-N-(1-carboxy-5-phosphooxy-5-oxopentan-1-yl)-L-glutamine + NADPH + H(+). It participates in amino-acid biosynthesis; L-lysine biosynthesis via AAA pathway; L-lysine from L-alpha-aminoadipate (Thermus route): step 3/5. Its function is as follows. Catalyzes the NADPH-dependent reduction of [LysW]-aminoadipate 6-phosphate to yield [LysW]-aminoadipate 6-semialdehyde. The polypeptide is Putative [LysW]-L-2-aminoadipate 6-phosphate reductase (Thermomicrobium roseum (strain ATCC 27502 / DSM 5159 / P-2)).